Reading from the N-terminus, the 288-residue chain is Proline iminopeptidase (288 aa).

Residues 27 to 274 (PVIVLHGGPG…SAHMPYIEEP (248 aa)) enclose the AB hydrolase-1 domain. Residue Ser101 is the Nucleophile of the active site. Residue Asp240 is part of the active site. Catalysis depends on His267, which acts as the Proton donor.

The protein belongs to the peptidase S33 family. Monomer.

Its subcellular location is the cytoplasm. It carries out the reaction Release of N-terminal proline from a peptide.. Its activity is regulated as follows. Completely inhibited by p-chloromercuribenzoate (PCMB) and heavy metal salts. Partially inhibited by proline and proline derivatives with proline as the amino terminus. Enzyme inactivated by PCMB is reactivated by incubation with 2-mercaptoethanol. Functionally, releases the N-terminal proline from various substrates including at least dipeptides Pro-Pro, Pro-Gln, Pro-Trp and Pro-Tyr. Also acts on amides (Pro-beta NA) and oligopeptides including Pro-Leu-GlyNH2, Pro-Leu-Gly, Pro-Phe-Gly-Lys, Pro-Pro-Ala-OBut and Pro-Pro-Gly-(Pro-Pro-Gly)(4). Higher activity toward small peptides (up to three residues), but very low activity for longer peptides. Has no activity against p-nitrophenyl acetate, poly_L-proline, Met-Pro or amino acyl amides other than Pro-betaNA (Pyr-betaNA, Phe-betaNA, Cys-betaNA, Met-betaNA, Leu-betaNA, Ala-betaNA and Z-Gly-Pro-betaNA). This is Proline iminopeptidase (pip) from Heyndrickxia coagulans (Weizmannia coagulans).